A 437-amino-acid polypeptide reads, in one-letter code: Cytochrome b (437 aa).

A helical transmembrane segment spans residues 45–65 (WIWGIVLAFTLVLQIVTGIVL). 2 residues coordinate heme b: histidine 97 and histidine 111. Helical transmembrane passes span 100-120 (GASL…YYGS), 129-149 (WIVG…GYVL), 156-176 (FWGA…GPSI), 194-214 (FFSL…IHIW), 248-268 (FVIK…AVVA), 298-318 (FLPF…VILV), 330-350 (FFGV…PWLD), 365-385 (MWFW…AMPT), and 391-411 (WISL…LPLL). Positions 198 and 212 each coordinate heme b.

The protein belongs to the cytochrome b family. In terms of assembly, the main subunits of complex b-c1 are: cytochrome b, cytochrome c1 and the Rieske protein. Requires heme b as cofactor.

Its subcellular location is the cell membrane. Functionally, component of the ubiquinol-cytochrome c reductase complex (complex III or cytochrome b-c1 complex), which is a respiratory chain that generates an electrochemical potential coupled to ATP synthesis. This Rhodobacter capsulatus (strain ATCC BAA-309 / NBRC 16581 / SB1003) protein is Cytochrome b (petB).